The chain runs to 326 residues: MELTDLLLVAILLLTARLTLSSPVPPACDPRLLNKLLRDSYLLHSRLSQCPDVNPLSIPVLLPAVDFSLGEWKTQTEQSKAQDILGAVSLLLEGVMAARGQLEPSCLSSLLGQLSGQVRLLLGALQGLLGTQLPPQGRTTAHKDPSALFLSLQQLLRGKVRFLLLVEGPALCVRRTLPTTAVPSRTSQLLTLNKFPNRTSGLLETNFSVVARTAGPGLLNRLQGFRAKIIPGQLNQTSGSLDQIPGYLNGTHEPVNGTHGLFAGTSLQTLEAPDVVPGAFNKGSLPLNLQSGLPPIPSLAADGYTLFPPSPTFPTPGSPPQLPPVS.

An N-terminal signal peptide occupies residues 1–21 (MELTDLLLVAILLLTARLTLS). 2 disulfides stabilise this stretch: Cys28–Cys172 and Cys50–Cys106. Residues Asn197, Asn206, Asn235, Asn249, and Asn256 are each glycosylated (N-linked (GlcNAc...) asparagine). The segment at 307–326 (FPPSPTFPTPGSPPQLPPVS) is disordered. Residues 308 to 326 (PPSPTFPTPGSPPQLPPVS) show a composition bias toward pro residues.

This sequence belongs to the EPO/TPO family.

Its subcellular location is the secreted. Its function is as follows. Lineage-specific cytokine affecting the proliferation and maturation of megakaryocytes from their committed progenitor cells. It acts at a late stage of megakaryocyte development. It may be the major physiological regulator of circulating platelets. The protein is Thrombopoietin (Thpo) of Rattus norvegicus (Rat).